The sequence spans 297 residues: MDLLGPMEMTEGSLCSFAAADDFYDDPCFNTSDMHFFEDLDPRLVHVGGLLKPEEHPHHHGHHHGHPHEEEHVRAPSGHHQAGRCLLWACKACKRKTTNADRRKAATMRERRRLSKVNEAFETLKRCTSTNPNQRLPKVEILRNAIRYIESLQALLREQEDAYYPVLEHYSGESDASSPRSNCSDGMMEYSGPPCSSRRRNSYDSSYYTESPNDPKHGKSSVVSSLDCLSSIVERISTDNSTCPILPPAEAVAEGSPCSPQEGASLNDSGAQIPSPTNCTPLPQDSSSSSNPIYQVL.

The interval 52 to 76 (KPEEHPHHHGHHHGHPHEEEHVRAP) is disordered. The bHLH domain maps to 101–152 (DRRKAATMRERRRLSKVNEAFETLKRCTSTNPNQRLPKVEILRNAIRYIESL). Disordered stretches follow at residues 171 to 221 (SGES…GKSS) and 243 to 297 (CPIL…YQVL). Polar residues-rich tracts occupy residues 174 to 184 (SDASSPRSNCS) and 258 to 297 (CSPQ…YQVL).

Efficient DNA binding requires dimerization with another bHLH protein. Seems to form active heterodimers with ITF-2.

It is found in the nucleus. Functionally, acts as a transcriptional activator that promotes transcription of muscle-specific target genes and plays a role in muscle differentiation. Induces fibroblasts to differentiate into myoblasts. Interacts with and is inhibited by the twist protein. This interaction probably involves the basic domains of both proteins. The protein is Myoblast determination protein 1 homolog (MYOD1) of Coturnix japonica (Japanese quail).